Reading from the N-terminus, the 70-residue chain is Gas vesicle protein A (70 aa).

This sequence belongs to the gas vesicle GvpA family. In terms of assembly, the gas vesicle shell is 2 nm thick and consists of a single layer of this protein. It forms helical ribs nearly perpendicular to the long axis of the vesicle.

Its subcellular location is the gas vesicle shell. Functionally, gas vesicles are hollow, gas filled proteinaceous nanostructures found in some microorganisms. During planktonic growth they allow positioning of the organism at a favorable depth for light or nutrient acquisition. GvpA forms the protein shell. The chain is Gas vesicle protein A from Cereibacter sphaeroides (strain ATCC 17023 / DSM 158 / JCM 6121 / CCUG 31486 / LMG 2827 / NBRC 12203 / NCIMB 8253 / ATH 2.4.1.) (Rhodobacter sphaeroides).